The sequence spans 308 residues: Aspartate carbamoyltransferase catalytic subunit (308 aa).

The carbamoyl phosphate site is built by Arg-57 and Thr-58. Lys-86 serves as a coordination point for L-aspartate. The carbamoyl phosphate site is built by Arg-107, His-135, and Gln-138. Residues Arg-168 and Arg-229 each contribute to the L-aspartate site. Residues Leu-268 and Pro-269 each coordinate carbamoyl phosphate.

This sequence belongs to the aspartate/ornithine carbamoyltransferase superfamily. ATCase family. Heterooligomer of catalytic and regulatory chains.

It carries out the reaction carbamoyl phosphate + L-aspartate = N-carbamoyl-L-aspartate + phosphate + H(+). It participates in pyrimidine metabolism; UMP biosynthesis via de novo pathway; (S)-dihydroorotate from bicarbonate: step 2/3. In terms of biological role, catalyzes the condensation of carbamoyl phosphate and aspartate to form carbamoyl aspartate and inorganic phosphate, the committed step in the de novo pyrimidine nucleotide biosynthesis pathway. The sequence is that of Aspartate carbamoyltransferase catalytic subunit from Pyrococcus abyssi (strain GE5 / Orsay).